The chain runs to 327 residues: DNA-directed RNA polymerase subunit alpha (327 aa).

Residues Met-1 to Glu-233 are alpha N-terminal domain (alpha-NTD). The alpha C-terminal domain (alpha-CTD) stretch occupies residues Leu-267–Lys-327.

This sequence belongs to the RNA polymerase alpha chain family. In terms of assembly, in plastids the minimal PEP RNA polymerase catalytic core is composed of four subunits: alpha, beta, beta', and beta''. When a (nuclear-encoded) sigma factor is associated with the core the holoenzyme is formed, which can initiate transcription.

The protein localises to the plastid. It is found in the chloroplast. It catalyses the reaction RNA(n) + a ribonucleoside 5'-triphosphate = RNA(n+1) + diphosphate. In terms of biological role, DNA-dependent RNA polymerase catalyzes the transcription of DNA into RNA using the four ribonucleoside triphosphates as substrates. The chain is DNA-directed RNA polymerase subunit alpha from Crucihimalaya wallichii (Rock-cress).